Consider the following 313-residue polypeptide: tRNA dimethylallyltransferase (313 aa).

8–15 is an ATP binding site; sequence GPTGTGKS. 10-15 is a substrate binding site; sequence TGTGKS.

Belongs to the IPP transferase family. In terms of assembly, monomer. Mg(2+) serves as cofactor.

The enzyme catalyses adenosine(37) in tRNA + dimethylallyl diphosphate = N(6)-dimethylallyladenosine(37) in tRNA + diphosphate. In terms of biological role, catalyzes the transfer of a dimethylallyl group onto the adenine at position 37 in tRNAs that read codons beginning with uridine, leading to the formation of N6-(dimethylallyl)adenosine (i(6)A). The polypeptide is tRNA dimethylallyltransferase (Mycolicibacterium gilvum (strain PYR-GCK) (Mycobacterium gilvum (strain PYR-GCK))).